Consider the following 391-residue polypeptide: Pectate lyase B (391 aa).

Positions 1-30 are cleaved as a signal peptide; that stretch reads MKKTVRSLCSTALALTLGFTLLSGPASVQA. Ca(2+) contacts are provided by aspartate 181, aspartate 203, and aspartate 207. Residue arginine 305 is part of the active site.

This sequence belongs to the polysaccharide lyase 1 family. It depends on Ca(2+) as a cofactor.

Its subcellular location is the secreted. The enzyme catalyses Eliminative cleavage of (1-&gt;4)-alpha-D-galacturonan to give oligosaccharides with 4-deoxy-alpha-D-galact-4-enuronosyl groups at their non-reducing ends.. It carries out the reaction Eliminative cleavage of (1-&gt;4)-alpha-D-galacturonan methyl ester to give oligosaccharides with 4-deoxy-6-O-methyl-alpha-D-galact-4-enuronosyl groups at their non-reducing ends.. It participates in glycan metabolism; pectin degradation. Functionally, catalyzes the depolymerization of both polygalacturonate and pectins of various methyl esterification degree, with an endo mode of action. Shows the highest activity on 20 to 34% methylated pectin but retains 67%, 51%, 25%, and 1% of its maximum activity on polygalacturonate and 8.5%, 55 to 70%, and 90% methylated pectin, respectively. This Paenibacillus amylolyticus protein is Pectate lyase B.